Reading from the N-terminus, the 498-residue chain is ATP synthase subunit beta, chloroplastic (498 aa).

Residue 172–179 (GGAGVGKT) participates in ATP binding.

It belongs to the ATPase alpha/beta chains family. In terms of assembly, F-type ATPases have 2 components, CF(1) - the catalytic core - and CF(0) - the membrane proton channel. CF(1) has five subunits: alpha(3), beta(3), gamma(1), delta(1), epsilon(1). CF(0) has four main subunits: a(1), b(1), b'(1) and c(9-12).

The protein resides in the plastid. The protein localises to the chloroplast thylakoid membrane. The enzyme catalyses ATP + H2O + 4 H(+)(in) = ADP + phosphate + 5 H(+)(out). Produces ATP from ADP in the presence of a proton gradient across the membrane. The catalytic sites are hosted primarily by the beta subunits. The polypeptide is ATP synthase subunit beta, chloroplastic (Populus tremuloides (Quaking aspen)).